The primary structure comprises 732 residues: Acylamino-acid-releasing enzyme (732 aa).

N-acetylmethionine is present on methionine 1. Residues serine 185 and serine 187 each carry the phosphoserine modification. Residues serine 587, aspartate 675, and histidine 707 each act as charge relay system in the active site.

In terms of assembly, homotetramer. As to expression, expressed in erythrocytes (at protein level).

It is found in the cytoplasm. The catalysed reaction is Cleavage of an N-acetyl or N-formyl amino acid from the N-terminus of a polypeptide.. Homotetramerization is required for activity. Tetramerization results in the formation of a gated channel which is involved in substrate selection and substrate access to the catalytic sites. Its function is as follows. This enzyme catalyzes the hydrolysis of the N-terminal peptide bond of an N-acetylated peptide to generate an N-acetylated amino acid and a peptide with a free N-terminus. It preferentially cleaves off Ac-Ala, Ac-Met and Ac-Ser. Also, involved in the degradation of oxidized and glycated proteins. The sequence is that of Acylamino-acid-releasing enzyme (APEH) from Homo sapiens (Human).